Here is a 1129-residue protein sequence, read N- to C-terminus: Inositol hexakisphosphate and diphosphoinositol-pentakisphosphate kinase 2 (1129 aa).

Ser-44 carries the phosphoserine modification. Substrate is bound at residue 59–60 (KK). Arg-140, Lys-193, His-200, and Arg-219 together coordinate ATP. 219-220 (RK) contributes to the substrate binding site. Ser-229 is modified (phosphoserine). Residues 243–246 (EEFM) and 252–254 (DVK) contribute to the ATP site. The substrate site is built by Lys-254 and Arg-268. ATP is bound by residues Ser-270, Asp-315, and 327–329 (DVN). 332 to 335 (SFVK) contributes to the substrate binding site. A polyphosphoinositide-binding domain region spans residues 377–448 (PTTSGTMMEL…VLDIARQLLM (72 aa)). Residues 904–945 (KGCEEDKNLPSGYGYRPASRENEGRRSLKTDDDEPHTSKRDE) are disordered. A compositionally biased stretch (basic and acidic residues) spans 921–945 (ASRENEGRRSLKTDDDEPHTSKRDE). Phosphoserine is present on residues Ser-1051, Ser-1058, and Ser-1066. The segment at 1070–1129 (YTPTKILPTPPAALKSSKASSKAAAGGPSQAMAPHTSSRKKSINSKTEGHEPKKSTGKKR) is disordered. The span at 1081-1098 (AALKSSKASSKAAAGGPS) shows a compositional bias: low complexity. 2 positions are modified to phosphoserine: Ser-1106 and Ser-1107.

This sequence belongs to the histidine acid phosphatase family. VIP1 subfamily. Ubiquitously expressed. Expressed in the cochlear and vestibular sensory hair cells, supporting cells and spiral ganglion neurons.

It localises to the cytoplasm. Its subcellular location is the cytosol. The enzyme catalyses 1D-myo-inositol hexakisphosphate + ATP = 1-diphospho-1D-myo-inositol 2,3,4,5,6-pentakisphosphate + ADP. The catalysed reaction is 5-diphospho-1D-myo-inositol 1,2,3,4,6-pentakisphosphate + ATP + H(+) = 1,5-bis(diphospho)-1D-myo-inositol 2,3,4,6-tetrakisphosphate + ADP. Its function is as follows. Bifunctional inositol kinase that acts in concert with the IP6K kinases IP6K1, IP6K2 and IP6K3 to synthesize the diphosphate group-containing inositol pyrophosphates diphosphoinositol pentakisphosphate, PP-InsP5, and bis-diphosphoinositol tetrakisphosphate, (PP)2-InsP4. PP-InsP5 and (PP)2-InsP4, also respectively called InsP7 and InsP8, regulate a variety of cellular processes, including apoptosis, vesicle trafficking, cytoskeletal dynamics, exocytosis, insulin signaling and neutrophil activation. Phosphorylates inositol hexakisphosphate (InsP6) at position 1 to produce PP-InsP5 which is in turn phosphorylated by IP6Ks to produce (PP)2-InsP4. Alternatively, phosphorylates PP-InsP5 at position 1, produced by IP6Ks from InsP6, to produce (PP)2-InsP4. Required for normal hearing. The protein is Inositol hexakisphosphate and diphosphoinositol-pentakisphosphate kinase 2 of Mus musculus (Mouse).